Here is a 109-residue protein sequence, read N- to C-terminus: Large ribosomal subunit protein uL22 (109 aa).

The protein belongs to the universal ribosomal protein uL22 family. Part of the 50S ribosomal subunit.

This protein binds specifically to 23S rRNA; its binding is stimulated by other ribosomal proteins, e.g. L4, L17, and L20. It is important during the early stages of 50S assembly. It makes multiple contacts with different domains of the 23S rRNA in the assembled 50S subunit and ribosome. Its function is as follows. The globular domain of the protein is located near the polypeptide exit tunnel on the outside of the subunit, while an extended beta-hairpin is found that lines the wall of the exit tunnel in the center of the 70S ribosome. The protein is Large ribosomal subunit protein uL22 of Paraburkholderia xenovorans (strain LB400).